A 229-amino-acid polypeptide reads, in one-letter code: GTP:AMP phosphotransferase (229 aa).

Residue 10–15 participates in a ribonucleoside 5'-triphosphate binding; that stretch reads GVGKGT. Positions 30–59 are NMP; sequence NVGNILRNEIKKESNIGKEVQNVVRSGNLV. Residues Arg-36, 57 to 59, Gly-87, 87 to 90, and Gln-94 each bind AMP; these read NLV and GFPR. The segment at 123–170 is LID; the sequence is GRRICNICDKNFNVSNIQQDSFDMPPILPSKDCIQCNGHTNLIKRKDD. Arg-178 contributes to the AMP binding site.

The protein belongs to the adenylate kinase family.

It is found in the mitochondrion. The enzyme catalyses a ribonucleoside 5'-triphosphate + AMP = a ribonucleoside 5'-diphosphate + ADP. It carries out the reaction GTP + AMP = GDP + ADP. With respect to regulation, inhibited by the dinucleoside pentaphosphate compound P1,P5-di(guanosine-5') pentaphosphate (GP5A). Its function is as follows. Catalyzes the reversible transfer of the terminal phosphate group between GTP and AMP. Has very low activity with UTP, ITP, CTP and IMP and no activity with ATP, GMP, CMP and UMP in vitro. This is GTP:AMP phosphotransferase from Plasmodium falciparum (isolate 3D7).